A 426-amino-acid chain; its full sequence is Dihydroorotase (426 aa).

His-55 and His-57 together coordinate Zn(2+). Substrate-binding positions include 57–59 (HLR) and Asn-89. Zn(2+) is bound by residues Asp-147, His-174, His-233, and Asp-306. Asp-306 is a catalytic residue. Substrate is bound by residues His-310 and 324 to 325 (FG).

The protein belongs to the metallo-dependent hydrolases superfamily. DHOase family. Class I DHOase subfamily. It depends on Zn(2+) as a cofactor.

It catalyses the reaction (S)-dihydroorotate + H2O = N-carbamoyl-L-aspartate + H(+). The protein operates within pyrimidine metabolism; UMP biosynthesis via de novo pathway; (S)-dihydroorotate from bicarbonate: step 3/3. Catalyzes the reversible cyclization of carbamoyl aspartate to dihydroorotate. This chain is Dihydroorotase, found in Thermus aquaticus.